The chain runs to 355 residues: Peptide chain release factor 1 (355 aa).

At Q231 the chain carries N5-methylglutamine.

It belongs to the prokaryotic/mitochondrial release factor family. Post-translationally, methylated by PrmC. Methylation increases the termination efficiency of RF1.

It is found in the cytoplasm. Peptide chain release factor 1 directs the termination of translation in response to the peptide chain termination codons UAG and UAA. This Nautilia profundicola (strain ATCC BAA-1463 / DSM 18972 / AmH) protein is Peptide chain release factor 1.